A 280-amino-acid polypeptide reads, in one-letter code: 30 kDa immediate-early protein 2 (280 aa).

A disordered region spans residues 36–164 (SEEEQGEEVE…KKSKRISELD (129 aa)). Composition is skewed to low complexity over residues 47-67 (RGAT…TSPT), 90-101 (SSSSSSCSSASD), and 132-147 (AASS…SSGG).

Activates the E1.7 promoter. This activation is augmented by the IE1 protein. It down-regulates the transcription of genes under the control of the major IE promoter. The protein is 30 kDa immediate-early protein 2 (UL122) of Human cytomegalovirus (strain Towne) (HHV-5).